The primary structure comprises 537 residues: Tripeptidyl aminopeptidase (537 aa).

The first 36 residues, 1–36, serve as a signal peptide directing secretion; sequence MRKSSIRRRATAFGTAGALVTATLIAGAVSAPAASA. Positions 37–39 are excised as a propeptide; the sequence is APA. One can recognise an AB hydrolase-1 domain in the interval 119–497; sequence GALIYNPGGP…SRLITERDAG (379 aa). Serine 245 serves as the catalytic Nucleophile. Residue aspartate 470 is part of the active site. Histidine 499 serves as the catalytic Proton donor.

Belongs to the peptidase S33 family.

It localises to the secreted. Cleaves tripeptides from the N-termini of proteins. Does not cleave mono- or dipeptides, or N-terminally blocked peptides. This chain is Tripeptidyl aminopeptidase, found in Streptomyces lividans.